Reading from the N-terminus, the 741-residue chain is uncharacterized protein (741 aa).

An N-terminal signal peptide occupies residues 1-18; it reads MKTISILAFLVLARLIEA. 3 disordered regions span residues 142 to 300, 423 to 528, and 646 to 681; these read PKVE…GNVD, EEDE…SEQG, and ETVAPDTNSPDADQEQPDSVEPDNETTDAPINVEDD. Residues 147 to 165 show a composition bias toward acidic residues; the sequence is EEEEEEYDGEEDDDDESLT. 2 stretches are compositionally biased toward low complexity: residues 183–197 and 205–266; these read VEPSTTTESAISTTE and STTV…SSTT. N232 and N241 each carry an N-linked (GlcNAc...) asparagine glycan. Residues 423-432 are compositionally biased toward acidic residues; that stretch reads EEDEIDETET. Residues 433-451 are compositionally biased toward low complexity; sequence TESTKTTETTKTTGPAETT. N-linked (GlcNAc...) asparagine glycosylation is found at N461 and N511. A compositionally biased stretch (acidic residues) spans 500-511; the sequence is PIDESTESEEPN. Positions 512–528 are enriched in low complexity; the sequence is ESVTVTGDTTTDTSEQG. Positions 646–656 are enriched in polar residues; the sequence is ETVAPDTNSPD. Over residues 657-671 the composition is skewed to acidic residues; sequence ADQEQPDSVEPDNET. N669 carries an N-linked (GlcNAc...) asparagine glycan. N719 is lipidated: GPI-anchor amidated asparagine. Residues 720-741 constitute a propeptide, removed in mature form; that stretch reads AANLAGSISLSSGVLLLILMLI.

It localises to the cell membrane. This is an uncharacterized protein from Candida albicans (strain SC5314 / ATCC MYA-2876) (Yeast).